The following is a 91-amino-acid chain: Small ribosomal subunit protein uS15 (91 aa).

Belongs to the universal ribosomal protein uS15 family. In terms of assembly, part of the 30S ribosomal subunit. Forms a bridge to the 50S subunit in the 70S ribosome, contacting the 23S rRNA.

Its function is as follows. One of the primary rRNA binding proteins, it binds directly to 16S rRNA where it helps nucleate assembly of the platform of the 30S subunit by binding and bridging several RNA helices of the 16S rRNA. In terms of biological role, forms an intersubunit bridge (bridge B4) with the 23S rRNA of the 50S subunit in the ribosome. The chain is Small ribosomal subunit protein uS15 from Rickettsia felis (strain ATCC VR-1525 / URRWXCal2) (Rickettsia azadi).